The sequence spans 128 residues: MKGYLWGGASVVLVTVAQLVLKWGMMNIPLLSLADINVQFLTMYFVQLASVMCGLMGYALSMLCWFFALRYLPLNRAYPLLSLSYALVYLGAVLLPWFNEPATLLKTLGAGFILLGIWLINIKPIKAS.

The Cytoplasmic portion of the chain corresponds to 1 to 10 (MKGYLWGGAS). The chain crosses the membrane as a helical span at residues 11–31 (VVLVTVAQLVLKWGMMNIPLL). At 32–47 (SLADINVQFLTMYFVQ) the chain is on the periplasmic side. Residues 48 to 68 (LASVMCGLMGYALSMLCWFFA) form a helical membrane-spanning segment. At 69–77 (LRYLPLNRA) the chain is on the cytoplasmic side. A helical transmembrane segment spans residues 78 to 98 (YPLLSLSYALVYLGAVLLPWF). The Periplasmic portion of the chain corresponds to 99 to 101 (NEP). The chain crosses the membrane as a helical span at residues 102 to 122 (ATLLKTLGAGFILLGIWLINI). The Cytoplasmic portion of the chain corresponds to 123 to 128 (KPIKAS).

The protein belongs to the ArnF family. As to quaternary structure, heterodimer of ArnE and ArnF.

It is found in the cell inner membrane. It participates in bacterial outer membrane biogenesis; lipopolysaccharide biosynthesis. In terms of biological role, translocates 4-amino-4-deoxy-L-arabinose-phosphoundecaprenol (alpha-L-Ara4N-phosphoundecaprenol) from the cytoplasmic to the periplasmic side of the inner membrane. This chain is Probable 4-amino-4-deoxy-L-arabinose-phosphoundecaprenol flippase subunit ArnF, found in Yersinia pseudotuberculosis serotype O:1b (strain IP 31758).